The chain runs to 603 residues: Complement factor I (603 aa).

An N-terminal signal peptide occupies residues 1–18 (MKLAHLSLFLLALHLSSS). 20 disulfides stabilise this stretch: cysteine 36–cysteine 260, cysteine 46–cysteine 57, cysteine 51–cysteine 62, cysteine 64–cysteine 96, cysteine 70–cysteine 89, cysteine 78–cysteine 109, cysteine 144–cysteine 186, cysteine 157–cysteine 219, cysteine 191–cysteine 201, cysteine 234–cysteine 252, cysteine 246–cysteine 261, cysteine 264–cysteine 276, cysteine 271–cysteine 289, cysteine 283–cysteine 298, cysteine 348–cysteine 473, cysteine 386–cysteine 402, cysteine 394–cysteine 464, cysteine 487–cysteine 551, cysteine 515–cysteine 530, and cysteine 541–cysteine 570. Residues 58 to 111 (IEGTCICKLPYQCPRAGTPVCAMNGRSYPTYCHQKSFECLHPEIKFSHNGTCAA) enclose the Kazal-like domain. 4 N-linked (GlcNAc...) asparagine glycosylation sites follow: asparagine 106, asparagine 116, asparagine 174, and asparagine 182. An SRCR domain is found at 117–217 (VSLIYGRTKT…TELSNGLAGV (101 aa)). 2 LDL-receptor class A domains span residues 218–262 (VCYK…LCCK) and 263–299 (GCRG…SRCE). Ca(2+) contacts are provided by lysine 244, asparagine 247, valine 249, aspartate 251, aspartate 257, and glutamate 258. N-linked (GlcNAc...) asparagine glycosylation occurs at asparagine 267. Ca(2+) contacts are provided by tyrosine 281, asparagine 284, glutamate 286, aspartate 288, aspartate 294, and glutamate 295. Positions 361-594 (VIGGKPANVG…YFDWISYHVG (234 aa)) constitute a Peptidase S1 domain. Catalysis depends on charge relay system residues histidine 401 and aspartate 449. The N-linked (GlcNAc...) asparagine glycan is linked to asparagine 514. Serine 545 functions as the Charge relay system in the catalytic mechanism. N-linked (GlcNAc...) asparagine glycosylation is present at asparagine 556.

This sequence belongs to the peptidase S1 family. As to quaternary structure, heterodimer of a light and heavy chains; disulfide-linked. The fully processed and mature protein circulates as a zymogen, and is allosterically activated by substrate-induced remodeling of the active site. Interacts with C3b. Interacts with complement factor H. As to expression, expressed in the liver by hepatocytes. Also present in other cells such as monocytes, fibroblasts or keratinocytes.

The protein localises to the secreted. The protein resides in the extracellular space. It catalyses the reaction Inactivates complement subcomponents C3b, iC3b and C4b by proteolytic cleavage.. In terms of biological role, trypsin-like serine protease that plays an essential role in regulating the immune response by controlling all complement pathways. Inhibits these pathways by cleaving three peptide bonds in the alpha-chain of C3b and two bonds in the alpha-chain of C4b thereby inactivating these proteins. Essential cofactors for these reactions include factor H and C4BP in the fluid phase and membrane cofactor protein/CD46 and CR1 on cell surfaces. The presence of these cofactors on healthy cells allows degradation of deposited C3b by CFI in order to prevent undesired complement activation, while in apoptotic cells or microbes, the absence of such cofactors leads to C3b-mediated complement activation and subsequent opsonization. This Mus musculus (Mouse) protein is Complement factor I (Cfi).